Consider the following 887-residue polypeptide: 3-hydroxy-3-methylglutaryl-coenzyme A reductase (887 aa).

Over 1–9 (MLSRLFRMH) the chain is Cytoplasmic. The chain crosses the membrane as a helical span at residues 10–39 (GLFVASHPWEVIVGTVTLTICMMSMNMFTG). At 40–56 (NNKICGWNYECPKFEED) the chain is on the lumenal side. A helical membrane pass occupies residues 57-78 (VLSSDIIILTITRCIAILYIYF). An SSD domain is found at 61–218 (DIIILTITRC…MTFFPACVSL (158 aa)). Residues 75–78 (YIYF) carry the INSIG-binding motif motif. The Cytoplasmic portion of the chain corresponds to 79 to 89 (QFQNLRQLGSK). Residue K89 forms a Glycyl lysine isopeptide (Lys-Gly) (interchain with G-Cter in ubiquitin) linkage. The helical transmembrane segment at 90 to 114 (YILGIAGLFTIFSSFVFSTVVIHFL) threads the bilayer. At 115-123 (DKELTGLNE) the chain is on the lumenal side. Residues 124-149 (ALPFFLLLIDLSRASALAKFALSSNS) traverse the membrane as a helical segment. Residues 150–159 (QDEVRENIAR) are Cytoplasmic-facing. Residues 160–187 (GMAILGPTFTLDALVECLVIGVGTMSGV) traverse the membrane as a helical segment. Residues 188-191 (RQLE) lie on the Lumenal side of the membrane. Residues 192–220 (IMCCFGCMSVLANYFVFMTFFPACVSLVL) traverse the membrane as a helical segment. The Cytoplasmic portion of the chain corresponds to 221-248 (ELSRESREGRPIWQLSHFARVLEEEENK). A Glycyl lysine isopeptide (Lys-Gly) (interchain with G-Cter in ubiquitin) cross-link involves residue K248. The chain crosses the membrane as a helical span at residues 249-275 (PNPVTQRVKMIMSLGLVLVHAHSRWIA). Residues 276-314 (DPSPQNSTTEHSKVSLGLDEDVSKRIEPSVSLWQFYLSK) lie on the Lumenal side of the membrane. N281 is a glycosylation site (N-linked (GlcNAc...) asparagine). A helical membrane pass occupies residues 315-339 (MISMDIEQVVTLSLAFLLAVKYIFF). Residues 340 to 887 (EQAETESTLS…LQGTCTKKAA (548 aa)) are Cytoplasmic-facing. Residues E558, K690, and D766 each act as charge relay system in the active site. Catalysis depends on H865, which acts as the Proton donor. S871 is subject to Phosphoserine; by AMPK.

It belongs to the HMG-CoA reductase family. As to quaternary structure, homotetramer. Homodimer. Interacts (via its SSD) with INSIG1; the interaction, accelerated by sterols, leads to the recruitment of HMGCR to AMFR/gp78 for its ubiquitination by the sterol-mediated ERAD pathway. Interacts with UBIAD1. Post-translationally, undergoes sterol-mediated ubiquitination and ER-associated degradation (ERAD). Accumulation of sterols in the endoplasmic reticulum (ER) membrane, triggers binding of the reductase to the ER membrane protein INSIG1 or INSIG2. The INSIG1 binding leads to the recruitment of the ubiquitin ligase, AMFR/gp78, RNF139 or RNF145, initiating ubiquitination of the reductase. The ubiquitinated reductase is then extracted from the ER membrane and delivered to cytosolic 26S proteosomes by a mechanism probably mediated by the ATPase Valosin-containing protein VCP/p97. The INSIG2-binding leads to the recruitment of the ubiquitin ligase RNF139, initiating ubiquitination of the reductase. Lys-248 is the main site of ubiquitination. Ubiquitination is enhanced by the presence of a geranylgeranylated protein. N-glycosylated. Deglycosylated by NGLY1 on release from the endoplasmic reticulum (ER) in a sterol-mediated manner. In terms of processing, phosphorylated. Phosphorylation at Ser-871 reduces the catalytic activity.

The protein resides in the endoplasmic reticulum membrane. It is found in the peroxisome membrane. It carries out the reaction (R)-mevalonate + 2 NADP(+) + CoA = (3S)-3-hydroxy-3-methylglutaryl-CoA + 2 NADPH + 2 H(+). It functions in the pathway metabolic intermediate biosynthesis; (R)-mevalonate biosynthesis; (R)-mevalonate from acetyl-CoA: step 3/3. With respect to regulation, regulated by a negative feedback mechanism through sterols and non-sterol metabolites derived from mevalonate. Phosphorylation at Ser-871 down-regulates the catalytic activity. Its function is as follows. Catalyzes the conversion of (3S)-hydroxy-3-methylglutaryl-CoA (HMG-CoA) to mevalonic acid, the rate-limiting step in the synthesis of cholesterol and other isoprenoids, thus plays a critical role in cellular cholesterol homeostasis. The chain is 3-hydroxy-3-methylglutaryl-coenzyme A reductase (HMGCR) from Mesocricetus auratus (Golden hamster).